The chain runs to 141 residues: Small ribosomal subunit protein bS6 (141 aa).

Positions 97 to 141 (TGQSEMLKAEENRSERRERRDRPEHSDSADGDDGDNSDVSDNADE) are disordered. Positions 103 to 124 (LKAEENRSERRERRDRPEHSDS) are enriched in basic and acidic residues. Acidic residues predominate over residues 125–141 (ADGDDGDNSDVSDNADE).

The protein belongs to the bacterial ribosomal protein bS6 family.

Its function is as follows. Binds together with bS18 to 16S ribosomal RNA. In Pseudomonas syringae pv. syringae (strain B728a), this protein is Small ribosomal subunit protein bS6.